We begin with the raw amino-acid sequence, 211 residues long: Peptidyl-prolyl cis-trans isomerase FKBP14 (211 aa).

The N-terminal stretch at Met-1–Gly-19 is a signal peptide. An intrachain disulfide couples Cys-38 to Cys-96. Residues Gly-45–Arg-135 form the PPIase FKBP-type domain. An EF-hand 1 domain is found at Arg-135–Lys-170. Asp-148, Asn-150, Asp-152, Arg-154, and Glu-159 together coordinate Ca(2+). Residue Asn-176 is glycosylated (N-linked (GlcNAc...) asparagine). In terms of domain architecture, EF-hand 2 spans His-179–Leu-211. 4 residues coordinate Ca(2+): Asp-192, Asp-194, Asp-196, and Glu-203. The Prevents secretion from ER signature appears at His-208–Leu-211.

As to quaternary structure, monomer. Homodimer. Interacts with type III, type IV and type X collagens.

It localises to the endoplasmic reticulum lumen. It catalyses the reaction [protein]-peptidylproline (omega=180) = [protein]-peptidylproline (omega=0). Inhibited by tacrolimus/FK506. In terms of biological role, PPIase which accelerates the folding of proteins during protein synthesis. Has a preference for substrates containing 4-hydroxylproline modifications, including type III collagen. May also target type VI and type X collagens. The sequence is that of Peptidyl-prolyl cis-trans isomerase FKBP14 (Fkbp14) from Mus musculus (Mouse).